The primary structure comprises 710 residues: Polyribonucleotide nucleotidyltransferase (710 aa).

The Mg(2+) site is built by Asp486 and Asp492. Residues 553-612 form the KH domain; it reads PRFETIKIHPDKIRDIIGKGGATIRSITEETNSSIDIDDDGTVKVYADDNEALQAALNRI. The region spanning 622–690 is the S1 motif domain; the sequence is GAIYEGTVVR…QRGRIKLSIK (69 aa).

The protein belongs to the polyribonucleotide nucleotidyltransferase family. Component of the RNA degradosome, which is a multiprotein complex involved in RNA processing and mRNA degradation. Requires Mg(2+) as cofactor.

The protein resides in the cytoplasm. It catalyses the reaction RNA(n+1) + phosphate = RNA(n) + a ribonucleoside 5'-diphosphate. In terms of biological role, involved in mRNA degradation. Catalyzes the phosphorolysis of single-stranded polyribonucleotides processively in the 3'- to 5'-direction. In Cellvibrio japonicus (strain Ueda107) (Pseudomonas fluorescens subsp. cellulosa), this protein is Polyribonucleotide nucleotidyltransferase.